A 103-amino-acid chain; its full sequence is Integration host factor subunit beta (103 aa).

Belongs to the bacterial histone-like protein family. As to quaternary structure, heterodimer of an alpha and a beta chain.

In terms of biological role, this protein is one of the two subunits of integration host factor, a specific DNA-binding protein that functions in genetic recombination as well as in transcriptional and translational control. The protein is Integration host factor subunit beta of Bradyrhizobium sp. (strain BTAi1 / ATCC BAA-1182).